A 377-amino-acid chain; its full sequence is Nuclear pore complex protein NUP54 (377 aa).

Positions 1 to 18 are enriched in low complexity; the sequence is MFGTPSSSPSFGTPSSTP. Residues 1–104 are disordered; sequence MFGTPSSSPS…NTAQQQQQTP (104 aa). Repeat copies occupy residues 2–3, 11–12, 20–21, 27–28, 36–37, 49–50, and 87–88. The interval 2–88 is 7 X 2 AA repeats of F-G; sequence FGTPSSSPSF…FQQQPSSNFG (87 aa). Residues 19–32 show a composition bias toward polar residues; it reads AFGTSSPAFGTPSA. Over residues 39–104 the composition is skewed to low complexity; the sequence is PSNPSFSSGG…NTAQQQQQTP (66 aa).

This sequence belongs to the NUP54 family. Part of the nuclear pore complex (NPC). The NPC has an eight-fold symmetrical structure comprising a central transport channel and two rings, the cytoplasmic and nuclear rings, to which eight filaments are attached. The cytoplasmic filaments have loose ends, while the nuclear filaments are joined in a distal ring, forming a nuclear basket. NPCs are highly dynamic in configuration and composition, and can be devided in 3 subcomplexes, the NUP62 subcomplex, the NUP107-160 subcomplex and the NUP93 subcomplex, containing approximately 30 different nucleoporin proteins.

It is found in the nucleus envelope. The protein localises to the nucleus. Its subcellular location is the nuclear pore complex. This is Nuclear pore complex protein NUP54 from Arabidopsis thaliana (Mouse-ear cress).